Here is a 393-residue protein sequence, read N- to C-terminus: Erythronate-4-phosphate dehydrogenase (393 aa).

2 residues coordinate substrate: S57 and T79. D159 contacts NAD(+). Residue R229 is part of the active site. D253 is an NAD(+) binding site. Residue E258 is part of the active site. Residue H275 is the Proton donor of the active site. G278 serves as a coordination point for NAD(+). Substrate is bound at residue Y279.

The protein belongs to the D-isomer specific 2-hydroxyacid dehydrogenase family. PdxB subfamily. In terms of assembly, homodimer.

The protein resides in the cytoplasm. It catalyses the reaction 4-phospho-D-erythronate + NAD(+) = (R)-3-hydroxy-2-oxo-4-phosphooxybutanoate + NADH + H(+). Its pathway is cofactor biosynthesis; pyridoxine 5'-phosphate biosynthesis; pyridoxine 5'-phosphate from D-erythrose 4-phosphate: step 2/5. In terms of biological role, catalyzes the oxidation of erythronate-4-phosphate to 3-hydroxy-2-oxo-4-phosphonooxybutanoate. The sequence is that of Erythronate-4-phosphate dehydrogenase from Colwellia psychrerythraea (strain 34H / ATCC BAA-681) (Vibrio psychroerythus).